We begin with the raw amino-acid sequence, 486 residues long: Photosystem II CP43 reaction center protein (486 aa).

A propeptide spanning residues 1 to 28 is cleaved from the precursor; that stretch reads MKVFVHGWQHKISHTRILYSLRRFYHVE. Helical transmembrane passes span 82–106, 147–168, 191–213, 268–288, and 304–325; these read LFEV…PHLA, LIGP…RDKN, KALF…RLIN, KPFA…LSYS, and WYNN…ASQA. [CaMn4O5] cluster is bound at residue E380. The chain crosses the membrane as a helical span at residues 460-484; that stretch reads RARAAAAGFEKGINRENEAVLSMRP.

The protein belongs to the PsbB/PsbC family. PsbC subfamily. In terms of assembly, PSII is composed of 1 copy each of membrane proteins PsbA, PsbB, PsbC, PsbD, PsbE, PsbF, PsbH, PsbI, PsbJ, PsbK, PsbL, PsbM, PsbT, PsbX, PsbY, PsbZ, Psb30/Ycf12, at least 3 peripheral proteins of the oxygen-evolving complex and a large number of cofactors. It forms dimeric complexes. Requires Binds multiple chlorophylls and provides some of the ligands for the Ca-4Mn-5O cluster of the oxygen-evolving complex. It may also provide a ligand for a Cl- that is required for oxygen evolution. PSII binds additional chlorophylls, carotenoids and specific lipids. as cofactor.

It localises to the plastid. Its subcellular location is the chloroplast thylakoid membrane. One of the components of the core complex of photosystem II (PSII). It binds chlorophyll and helps catalyze the primary light-induced photochemical processes of PSII. PSII is a light-driven water:plastoquinone oxidoreductase, using light energy to abstract electrons from H(2)O, generating O(2) and a proton gradient subsequently used for ATP formation. This chain is Photosystem II CP43 reaction center protein, found in Gracilaria tenuistipitata var. liui (Red alga).